We begin with the raw amino-acid sequence, 96 residues long: Small ribosomal subunit protein bS21 (96 aa).

A disordered region spans residues 52–96 (RRARKQARKTAIREGLIAAPKPKARPVSPRRPAAPAPASSPVGAA). Over residues 69–96 (AAPKPKARPVSPRRPAAPAPASSPVGAA) the composition is skewed to low complexity.

Belongs to the bacterial ribosomal protein bS21 family.

The protein is Small ribosomal subunit protein bS21 of Methylobacterium nodulans (strain LMG 21967 / CNCM I-2342 / ORS 2060).